The following is a 471-amino-acid chain: Ribosomal protein uS12 methylthiotransferase RimO (471 aa).

An MTTase N-terminal domain is found at 19–134 (PRVGFVSLGC…VMNAVHTHLP (116 aa)). [4Fe-4S] cluster-binding residues include Cys-28, Cys-64, Cys-93, Cys-169, Cys-173, and Cys-176. The Radical SAM core domain maps to 155–396 (LTPRHYAYLK…MAVAEEVSTA (242 aa)). The TRAM domain maps to 399-471 (QKRVGQTMQV…QGHDLVGQPV (73 aa)).

It belongs to the methylthiotransferase family. RimO subfamily. It depends on [4Fe-4S] cluster as a cofactor.

The protein localises to the cytoplasm. The enzyme catalyses L-aspartate(89)-[ribosomal protein uS12]-hydrogen + (sulfur carrier)-SH + AH2 + 2 S-adenosyl-L-methionine = 3-methylsulfanyl-L-aspartate(89)-[ribosomal protein uS12]-hydrogen + (sulfur carrier)-H + 5'-deoxyadenosine + L-methionine + A + S-adenosyl-L-homocysteine + 2 H(+). In terms of biological role, catalyzes the methylthiolation of an aspartic acid residue of ribosomal protein uS12. The polypeptide is Ribosomal protein uS12 methylthiotransferase RimO (Delftia acidovorans (strain DSM 14801 / SPH-1)).